Here is a 739-residue protein sequence, read N- to C-terminus: tRNA 5-methylaminomethyl-2-thiouridine biosynthesis bifunctional protein MnmC (739 aa).

The segment at 1 to 282 (MDKVTPAKLS…KREMLTATKL (282 aa)) is tRNA (mnm(5)s(2)U34)-methyltransferase. Positions 330 to 739 (IGAGVCGLMA…HRSSLKKPLS (410 aa)) are FAD-dependent cmnm(5)s(2)U34 oxidoreductase.

The protein in the N-terminal section; belongs to the methyltransferase superfamily. tRNA (mnm(5)s(2)U34)-methyltransferase family. In the C-terminal section; belongs to the DAO family. FAD serves as cofactor.

The protein resides in the cytoplasm. The enzyme catalyses 5-aminomethyl-2-thiouridine(34) in tRNA + S-adenosyl-L-methionine = 5-methylaminomethyl-2-thiouridine(34) in tRNA + S-adenosyl-L-homocysteine + H(+). Functionally, catalyzes the last two steps in the biosynthesis of 5-methylaminomethyl-2-thiouridine (mnm(5)s(2)U) at the wobble position (U34) in tRNA. Catalyzes the FAD-dependent demodification of cmnm(5)s(2)U34 to nm(5)s(2)U34, followed by the transfer of a methyl group from S-adenosyl-L-methionine to nm(5)s(2)U34, to form mnm(5)s(2)U34. In Psychrobacter sp. (strain PRwf-1), this protein is tRNA 5-methylaminomethyl-2-thiouridine biosynthesis bifunctional protein MnmC.